A 361-amino-acid polypeptide reads, in one-letter code: MGSSFGKLFTISSFGESHGGGVGVIIDGCPPRLELDINEIQNDLNRRRPGQSKITTPRNESDEVEILSGLLGNKTLGTPIAMVVRNKDHRPKDYSEIKKTFRPSHADATYQKKYGIQASSGGGRASARETIGRVAAGSVAKQLLNKSAKTEILAWVKRIHDIEAEIHPSEVTFDEIEKNIVRCPNQSAADLMIQRVEAFGKEGDSCGGVIECVVRNPPIGIGMPVFDKLEADLAKALMSLPATKGFEVGSGFGGTYLKGSEHNDPFLPSDSNQLKTATNNSGGIQGGISNGEDIVLRVGFKPTATIRKSQKTIDEDGNAITLKATGRHDPCVLPRAVPMVEAMVALVLADHLLRQRGQCPD.

Arginine 47 is an NADP(+) binding site. FMN is bound by residues 124 to 126 (RAS), glycine 286, 301 to 305 (KPTAT), and arginine 327.

It belongs to the chorismate synthase family. As to quaternary structure, homotetramer. The cofactor is FMNH2.

It catalyses the reaction 5-O-(1-carboxyvinyl)-3-phosphoshikimate = chorismate + phosphate. It functions in the pathway metabolic intermediate biosynthesis; chorismate biosynthesis; chorismate from D-erythrose 4-phosphate and phosphoenolpyruvate: step 7/7. Catalyzes the anti-1,4-elimination of the C-3 phosphate and the C-6 proR hydrogen from 5-enolpyruvylshikimate-3-phosphate (EPSP) to yield chorismate, which is the branch point compound that serves as the starting substrate for the three terminal pathways of aromatic amino acid biosynthesis. This reaction introduces a second double bond into the aromatic ring system. The chain is Chorismate synthase from Prochlorococcus marinus (strain NATL2A).